We begin with the raw amino-acid sequence, 455 residues long: Bleomycin hydrolase (455 aa).

Met-1 carries the post-translational modification N-acetylmethionine. Residues Cys-73 and His-372 contribute to the active site. At Lys-391 the chain carries N6-acetyllysine. Asn-396 is an active-site residue.

It belongs to the peptidase C1 family. In terms of assembly, homohexamer. Interacts with NUDT12 (via ANK repeats).

It localises to the cytoplasm. It is found in the cytoplasmic granule. It catalyses the reaction Inactivates bleomycin B2 (a cytotoxic glycometallopeptide) by hydrolysis of a carboxyamide bond of beta-aminoalanine, but also shows general aminopeptidase activity. The specificity varies somewhat with source, but amino acid arylamides of Met, Leu and Ala are preferred.. The normal physiological role of BLM hydrolase is unknown, but it catalyzes the inactivation of the antitumor drug BLM (a glycopeptide) by hydrolyzing the carboxamide bond of its B-aminoalaninamide moiety thus protecting normal and malignant cells from BLM toxicity. This is Bleomycin hydrolase (Blmh) from Mus musculus (Mouse).